Here is a 650-residue protein sequence, read N- to C-terminus: MRGIALFVAAVSLIVEGTAESSICSDFGNEFCRNAECEVVPGAEDDFVCKCPRDNMYFNAAEKQCEYKDTCKTRECSYGRCVESNPSKASCVCEASDDLTLQCKIKNDYATDCRNRGGTAKLRTDGFIGATCDCGEWGAMNMTTRNCVPTTCLRPDLTCKDLCEKNLLQRDSRCCQGWNTANCSAAPPADSYCSPGSPKGPDGQCINACKTKEAGFVCKHGCRSTGKAYECTCPSGSTVAEDGITCKSISHTVSCTAEQKQTCRPTEDCRVHKGTVLCECPWNQHLVGDTCISDCVDKKCHEEFMDCGVYMNRQSCYCPWKSRKPGPNVNINECLLNEYYYTVSFTPNISFDSDHCKWYEDRVLEAIRTSIGKEVFKVEILNCTQDIKARLIAEKPLSKHVLRKLQACEHPIGEWCMMYPKLLIKKNSATEIEEENLCDSLLKDQEAAYKGQNKCVKVDNLFWFQCADGYTTTYEMTRGRLRRSVCKAGVSCNENEQSECADKGQIFVYENGKANCQCPPDTKPGEIGCIERTTCNPKEIQECQDKKLECVYKNHKAECECPDDHECYREPAKDSCSEEDNGKCQSSGQRCVIENGKAVCKEKSEATTAATTTTKAKDKDPDPGKSSAAAVSATGLLLLLAATSVTAASL.

The first 19 residues, 1-19 (MRGIALFVAAVSLIVEGTA), serve as a signal peptide directing secretion. 2 consecutive EGF-like domains span residues 20–66 (ESSI…KQCE) and 67–104 (YKDT…LQCK). 6 disulfides stabilise this stretch: C24–C37, C32–C49, C51–C65, C71–C81, C76–C91, and C93–C103. N141 and N182 each carry an N-linked (GlcNAc...) asparagine glycan. 3 EGF-like domains span residues 205–247 (CINA…ITCK), 251–292 (HTVS…DTCI), and 291–335 (CISD…NECL). 9 disulfide bridges follow: C209-C222, C218-C231, C233-C246, C255-C269, C263-C278, C280-C291, C295-C307, C300-C316, and C318-C334. Residues N348 and N382 are each glycosylated (N-linked (GlcNAc...) asparagine). 2 EGF-like domains span residues 482–530 (RRSV…IGCI) and 531–568 (ERTT…HECY). Intrachain disulfides connect C486–C500, C492–C516, C518–C529, C535–C550, C543–C559, and C561–C567. The interval 603 to 628 (KSEATTAATTTTKAKDKDPDPGKSSA) is disordered. Residue S627 is the site of GPI-anchor amidated serine attachment. The propeptide at 628-650 (AAAVSATGLLLLLAATSVTAASL) is removed in mature form.

It is found in the cell membrane. In Rhipicephalus microplus (Cattle tick), this protein is Glycoprotein antigen BM86.